The sequence spans 557 residues: Myo-inositol transporter 2 (557 aa).

The Cytoplasmic portion of the chain corresponds to 1–76 (MDFNNIPLAT…ENGEGFEAEK (76 aa)). The segment at 24-69 (EMTTRPSETKKKVPFSEDMREIPSLPNEEEANATDPQANEVADENG) is disordered. Residues 30–44 (SETKKKVPFSEDMRE) are compositionally biased toward basic and acidic residues. A helical transmembrane segment spans residues 77-97 (ISSWIWVLSAVAGISGLLFGY). Over 98–99 (DT) the chain is Extracellular. Residues 100–120 (GVISGALAVLGSDLGHVLSSG) traverse the membrane as a helical segment. Residues 121 to 123 (QKE) are Cytoplasmic-facing. Residues 124-144 (LITSATSFAALISATTSGWLA) form a helical membrane-spanning segment. At 145–157 (DWVGRKRLLLCAD) the chain is on the extracellular side. The helical transmembrane segment at 158 to 178 (AIFVIGSVIMAASRNVAMMVV) threads the bilayer. The Cytoplasmic segment spans residues 179–180 (GR). A helical membrane pass occupies residues 181–201 (FIVGYGIGLTSLIVPMYITEL). Topologically, residues 202 to 209 (APARLRGR) are extracellular. Residues 210–230 (LVIIYVVFITGGQLIAYSLNA) traverse the membrane as a helical segment. The Cytoplasmic portion of the chain corresponds to 231–240 (AFEHVHQGWR). Residues 241-261 (IMFGIGAAPALGQLISLFWTP) traverse the membrane as a helical segment. The Extracellular portion of the chain corresponds to 262–367 (ESPRYLLRHN…IFQSVGFKNS (106 aa)). A helical membrane pass occupies residues 368 to 388 (ISVSIVVGATNFVFTIVAFMF). The Cytoplasmic portion of the chain corresponds to 389–396 (IDRIGRRR). A helical transmembrane segment spans residues 397–417 (ILLCTSAVMIAGLALCAIAYH). The Extracellular portion of the chain corresponds to 418–432 (FLPADTTQNTNSGWQ). The chain crosses the membrane as a helical span at residues 433–453 (YVVLASIIIFLASYASGIGNI). The Cytoplasmic segment spans residues 454–468 (PWQQAELFPMEVRAL). The chain crosses the membrane as a helical span at residues 469–489 (GAGFSTAINWVGNLIISASFL). Residues 490–498 (TMMESITPT) lie on the Extracellular side of the membrane. Residues 499 to 519 (GTFALFAGFCFVGLVTSYFTY) form a helical membrane-spanning segment. Residues 520-557 (PELAGMSIENIHKLLEKGFWQAVKESTKRVRKGRIDEA) are Cytoplasmic-facing.

The protein belongs to the major facilitator superfamily. Sugar transporter (TC 2.A.1.1) family.

It is found in the membrane. It catalyses the reaction myo-inositol(out) + H(+)(out) = myo-inositol(in) + H(+)(in). Functionally, transporter for myo-inositol. This chain is Myo-inositol transporter 2 (itr2), found in Schizosaccharomyces pombe (strain 972 / ATCC 24843) (Fission yeast).